We begin with the raw amino-acid sequence, 172 residues long: Crossover junction endodeoxyribonuclease RuvC (172 aa).

Residues Asp7, Glu67, and Asp140 contribute to the active site. Mg(2+)-binding residues include Asp7, Glu67, and Asp140.

The protein belongs to the RuvC family. In terms of assembly, homodimer which binds Holliday junction (HJ) DNA. The HJ becomes 2-fold symmetrical on binding to RuvC with unstacked arms; it has a different conformation from HJ DNA in complex with RuvA. In the full resolvosome a probable DNA-RuvA(4)-RuvB(12)-RuvC(2) complex forms which resolves the HJ. The cofactor is Mg(2+).

It localises to the cytoplasm. The catalysed reaction is Endonucleolytic cleavage at a junction such as a reciprocal single-stranded crossover between two homologous DNA duplexes (Holliday junction).. Its function is as follows. The RuvA-RuvB-RuvC complex processes Holliday junction (HJ) DNA during genetic recombination and DNA repair. Endonuclease that resolves HJ intermediates. Cleaves cruciform DNA by making single-stranded nicks across the HJ at symmetrical positions within the homologous arms, yielding a 5'-phosphate and a 3'-hydroxyl group; requires a central core of homology in the junction. The consensus cleavage sequence is 5'-(A/T)TT(C/G)-3'. Cleavage occurs on the 3'-side of the TT dinucleotide at the point of strand exchange. HJ branch migration catalyzed by RuvA-RuvB allows RuvC to scan DNA until it finds its consensus sequence, where it cleaves and resolves the cruciform DNA. The polypeptide is Crossover junction endodeoxyribonuclease RuvC (Syntrophomonas wolfei subsp. wolfei (strain DSM 2245B / Goettingen)).